Reading from the N-terminus, the 142-residue chain is Large ribosomal subunit protein uL11 (142 aa).

The protein belongs to the universal ribosomal protein uL11 family. Part of the ribosomal stalk of the 50S ribosomal subunit. Interacts with L10 and the large rRNA to form the base of the stalk. L10 forms an elongated spine to which L12 dimers bind in a sequential fashion forming a multimeric L10(L12)X complex. One or more lysine residues are methylated.

Functionally, forms part of the ribosomal stalk which helps the ribosome interact with GTP-bound translation factors. This is Large ribosomal subunit protein uL11 from Mesorhizobium japonicum (strain LMG 29417 / CECT 9101 / MAFF 303099) (Mesorhizobium loti (strain MAFF 303099)).